We begin with the raw amino-acid sequence, 138 residues long: 6,7-dimethyl-8-ribityllumazine synthase (138 aa).

Residues F13, 45-47 (VFD), and 69-71 (AVI) contribute to the 5-amino-6-(D-ribitylamino)uracil site. 74–75 (AT) provides a ligand contact to (2S)-2-hydroxy-3-oxobutyl phosphate. The active-site Proton donor is H77. 5-amino-6-(D-ribitylamino)uracil is bound at residue L102. Position 117 (R117) interacts with (2S)-2-hydroxy-3-oxobutyl phosphate.

It belongs to the DMRL synthase family.

It catalyses the reaction (2S)-2-hydroxy-3-oxobutyl phosphate + 5-amino-6-(D-ribitylamino)uracil = 6,7-dimethyl-8-(1-D-ribityl)lumazine + phosphate + 2 H2O + H(+). It participates in cofactor biosynthesis; riboflavin biosynthesis; riboflavin from 2-hydroxy-3-oxobutyl phosphate and 5-amino-6-(D-ribitylamino)uracil: step 1/2. Catalyzes the formation of 6,7-dimethyl-8-ribityllumazine by condensation of 5-amino-6-(D-ribitylamino)uracil with 3,4-dihydroxy-2-butanone 4-phosphate. This is the penultimate step in the biosynthesis of riboflavin. The polypeptide is 6,7-dimethyl-8-ribityllumazine synthase (Methanobrevibacter smithii (strain ATCC 35061 / DSM 861 / OCM 144 / PS)).